A 204-amino-acid chain; its full sequence is Protein LURP-one-related 14 (204 aa).

This sequence belongs to the LOR family.

In terms of biological role, might be related to the phospholipid scramblase and tubby-like superfamily of membrane tethered transcription factors. The chain is Protein LURP-one-related 14 from Arabidopsis thaliana (Mouse-ear cress).